A 147-amino-acid polypeptide reads, in one-letter code: Large ribosomal subunit protein uL15 (147 aa).

The tract at residues 1–58 (MKLHELKPAQGSTKAPKRLGRGIGSGTGKTSGKGHKGQKARAGGGVRPGFEGGQQPLA) is disordered. Gly residues-rich tracts occupy residues 21–31 (RGIGSGTGKTS) and 42–52 (AGGGVRPGFEG).

This sequence belongs to the universal ribosomal protein uL15 family. In terms of assembly, part of the 50S ribosomal subunit.

In terms of biological role, binds to the 23S rRNA. The protein is Large ribosomal subunit protein uL15 of Desulfitobacterium hafniense (strain Y51).